A 557-amino-acid chain; its full sequence is Dicarboxylate transporter 1, chloroplastic (557 aa).

The N-terminal 69 residues, Met1–Val69, are a transit peptide targeting the chloroplast. 12 helical membrane-spanning segments follow: residues Ala90–Val110, Leu122–Val142, Phe158–Phe178, Ala229–Gly249, Leu256–Leu276, Ala305–Tyr325, Ile355–Val375, Asp376–Trp396, Trp411–Phe431, Phe438–Phe458, Ala477–Ala497, and Tyr531–Trp551.

The protein belongs to the SLC13A/DASS transporter (TC 2.A.47) family. DIT1 subfamily. As to expression, expressed in roots, rosette and cauline leaves, stems, flowers and siliques.

It localises to the plastid. It is found in the chloroplast inner membrane. 2-oxoglutarate/malate translocator involved with DIT2-1 in primary ammonia assimilation and in the re-assimilation of ammonia generated by the photorespiratory pathway. Imports 2-oxoglutarate into plastids as precursor for ammonia assimilation. 2-oxoglutarate is converted to glutamate, the end product of ammonia assimilation, which is exported to the cytosol by DIT2-1. This chain is Dicarboxylate transporter 1, chloroplastic (DIT1), found in Arabidopsis thaliana (Mouse-ear cress).